The chain runs to 347 residues: SUMO-activating enzyme subunit 1 (347 aa).

The protein belongs to the ubiquitin-activating E1 family. Heterodimer of sae1 and uba2/sae2. The heterodimer corresponds to the two domains that are encoded on a single polypeptide chain in ubiquitin-activating enzyme E1. Interacts with ube2i.

It localises to the nucleus. It functions in the pathway protein modification; protein sumoylation. The heterodimer acts as an E1 ligase for sumo1, sumo2, and sumo3. It mediates ATP-dependent activation of sumo proteins followed by formation of a thioester bond between a sumo protein and a conserved active site cysteine residue on uba2/sae2. This Xenopus tropicalis (Western clawed frog) protein is SUMO-activating enzyme subunit 1 (sae1).